The following is a 236-amino-acid chain: Peptidase E (236 aa).

Residues serine 122, aspartate 137, and histidine 159 each act as charge relay system in the active site.

The protein belongs to the peptidase S51 family.

The protein localises to the cytoplasm. It carries out the reaction Dipeptidase E catalyzes the hydrolysis of dipeptides Asp-|-Xaa. It does not act on peptides with N-terminal Glu, Asn or Gln, nor does it cleave isoaspartyl peptides.. In terms of biological role, hydrolyzes dipeptides containing N-terminal aspartate residues. May play a role in allowing the cell to use peptide aspartate to spare carbon otherwise required for the synthesis of the aspartate family of amino acids. The sequence is that of Peptidase E from Shewanella sp. (strain ANA-3).